Consider the following 420-residue polypeptide: Pre-mRNA-splicing factor RBM22 (420 aa).

N-acetylalanine is present on alanine 2. Phosphoserine occurs at positions 4 and 102. Residues lysine 139 and lysine 149 each participate in a glycyl lysine isopeptide (Lys-Gly) (interchain with G-Cter in SUMO2) cross-link. Residues 159–186 (RNRPHICSFWVKGECKRGEECPYRHEKP) form a C3H1-type zinc finger. Lysine 212 carries the post-translational modification N6-acetyllysine. The 74-residue stretch at 232–305 (TTLYVGGLGD…RRLNVKWGRS (74 aa)) folds into the RRM domain. A Glycyl lysine isopeptide (Lys-Gly) (interchain with G-Cter in SUMO2) cross-link involves residue lysine 290. Disordered stretches follow at residues 303 to 343 (GRSQ…AAEE) and 372 to 420 (APPP…HSSP). A compositionally biased stretch (basic and acidic residues) spans 309–318 (RGKEKEKDGT).

It belongs to the SLT11 family. As to quaternary structure, component of the pre-catalytic and catalytic spliceosome complexes. Component of the postcatalytic spliceosome P complex. Interacts with PDCD6; the interaction induces translocation of PDCD6 in the cytoplasm. Interacts with PPIL1.

The protein localises to the nucleus. The protein resides in the cytoplasm. Required for pre-mRNA splicing as component of the activated spliceosome. Involved in the first step of pre-mRNA splicing. Binds directly to the internal stem-loop (ISL) domain of the U6 snRNA and to the pre-mRNA intron near the 5' splice site during the activation and catalytic phases of the spliceosome cycle. Involved in both translocations of the nuclear SLU7 to the cytoplasm and the cytosolic calcium-binding protein PDCD6 to the nucleus upon cellular stress responses. The chain is Pre-mRNA-splicing factor RBM22 (RBM22) from Homo sapiens (Human).